The chain runs to 560 residues: Membrane-bound O-acyltransferase GUP1 (560 aa).

The Extracellular portion of the chain corresponds to 1-43 (MSLISILSPLITSEGLDSRIKPSPKKDASTTTKPSLWKTTEFK). Residues 44–64 (FYYIAFLVVVPLMFYAGLQAS) traverse the membrane as a helical segment. The Cytoplasmic portion of the chain corresponds to 65–101 (SPENPNYARYERLLSQGWLFGRKVDNSDSQYRFFRDN). The helical transmembrane segment at 102 to 122 (FALLSVLMLVHTSIKRIVLYS) threads the bilayer. The Extracellular segment spans residues 123–131 (TNITKLRFD). A helical membrane pass occupies residues 132-152 (LIFGLIFLVAAHGVNSIRILA). Residues 153 to 165 (HMLILYAIAHVLK) lie on the Cytoplasmic side of the membrane. A helical transmembrane segment spans residues 166 to 185 (NFRRIATISIWIYGISTLFI). The Extracellular portion of the chain corresponds to 186–276 (NDNFRAYPFG…AAHPIQDYSL (91 aa)). The chain crosses the membrane as a helical span at residues 277 to 297 (MNYIAYVTYTPLFIAGPIITF). The Cytoplasmic portion of the chain corresponds to 298–322 (NDYVYQSKHTLPSINFKFIFYYAVR). A helical transmembrane segment spans residues 323–343 (FVIALLSMEFILHFLHVVAIS). Topologically, residues 344-352 (KTKAWENDT) are extracellular. The helical transmembrane segment at 353 to 373 (PFQISMIGLFNLNIIWLKLLI) threads the bilayer. Residues 374–432 (PWRLFRLWALLDGIDTPENMIRCVDNNYSSLAFWRAWHRSYNKWVVRYIYIPLGGSKNR) lie on the Cytoplasmic side of the membrane. A run of 2 helical transmembrane segments spans residues 433-453 (VLTS…ELKL) and 454-474 (LLWG…TQIF). The active site involves H447. Over 475–485 (SHYTDAVWYRH) the chain is Cytoplasmic. A helical transmembrane segment spans residues 486-506 (VCAVGAVFNIWVMMIANLFGF). The Extracellular portion of the chain corresponds to 507 to 526 (CLGSDGTKKLLSDMFCTVSG). The helical transmembrane segment at 527 to 547 (FKFVILASVSLFIAVQIMFEI) threads the bilayer. The Cytoplasmic portion of the chain corresponds to 548-560 (REEEKRHGIYLKC).

This sequence belongs to the membrane-bound acyltransferase family. Interacts with mitochondrial outer membrane voltage-dependent anion channel (VDAC) POR1.

The protein localises to the cell membrane. It localises to the endoplasmic reticulum membrane. Its subcellular location is the mitochondrion membrane. Membrane-bound O-acyltransferase involved in the remodeling of glycosylphosphatidylinositol (GPI) anchors. Acts only on GPI-anchored proteins, but not on free GPI lipids. Acts as an acyltransferase for GPI anchors that adds C26 fatty acids to the sn2 position of lyso-PI-containing GPI anchors. PER1 first deacylates, GUP1 subsequently reacylates the anchor lipid, thus replacing a shorter fatty acid (C16:0 or C18:0) by C26:0. Also involved in lipid metabolism, having profound effects on sphingolipid-sterol-ordered domains integrity and assembly. Together with GUP2, has an influence on the chemical composition of the yeast extracellular matrix (yECM) in yeast multicellular aggregates, such as biofilms and colonies. Involved in cell integrity and apoptosis. This Saccharomyces cerevisiae (strain ATCC 204508 / S288c) (Baker's yeast) protein is Membrane-bound O-acyltransferase GUP1 (GUP1).